The sequence spans 380 residues: Tryptophan 2,3-dioxygenase (380 aa).

Residues 57–61 (FIITH) and Arg128 contribute to the substrate site. His313 contributes to the heme binding site. Residue Thr328 coordinates substrate.

This sequence belongs to the tryptophan 2,3-dioxygenase family. Homotetramer. Dimer of dimers. It depends on heme as a cofactor.

It catalyses the reaction L-tryptophan + O2 = N-formyl-L-kynurenine. It participates in amino-acid degradation; L-tryptophan degradation via kynurenine pathway; L-kynurenine from L-tryptophan: step 1/2. It functions in the pathway pigment biosynthesis; ommochrome biosynthesis. In terms of biological role, heme-dependent dioxygenase that catalyzes the oxidative cleavage of the L-tryptophan (L-Trp) pyrrole ring and converts L-tryptophan to N-formyl-L-kynurenine. Catalyzes the oxidative cleavage of the indole moiety. The chain is Tryptophan 2,3-dioxygenase from Drosophila mojavensis (Fruit fly).